The following is a 250-amino-acid chain: MFKVLLEPDLQEALIFLNESVNALLTIYSECEILYSGRAKSRASLSPRLTIIKPDGSVIIHGPTKREPVNWQPPGSRIEYSIESGVLTVNAERKRPKERLSILHHRVYYITSSEVKPGEFFLVGREKDEVDFIINNPDVIEGGFKPIHREYRTPYGTVDLIGKDKEGNLVVLEFKRAKASLQAVSQLYRYIMYFKEIGENARGILVAPGISENALNLLKRLELEYVNISDKLGDSTISRPINYVPNLQRD.

Belongs to the NucS endonuclease family.

It is found in the cytoplasm. In terms of biological role, cleaves both 3' and 5' ssDNA extremities of branched DNA structures. This is Endonuclease NucS from Sulfolobus acidocaldarius (strain ATCC 33909 / DSM 639 / JCM 8929 / NBRC 15157 / NCIMB 11770).